A 536-amino-acid polypeptide reads, in one-letter code: Glycine--tRNA ligase (536 aa).

Residues 56 to 67 (LVSPAGAPSTFE) form an insert region. Substrate is bound by residues Arg-106 and Glu-213. Residues 245 to 247 (RNE), 255 to 260 (FRSREF), and 333 to 334 (EL) contribute to the ATP site. 260–264 (FEQME) contributes to the substrate binding site. An insert region spans residues 350 to 372 (EGKLDPATNPMTVELNEHGKPKH). Residue 396 to 400 (EPSAG) participates in substrate binding. 400-403 (GADR) lines the ATP pocket.

The protein belongs to the class-II aminoacyl-tRNA synthetase family. In terms of assembly, homodimer.

It is found in the cytoplasm. It carries out the reaction tRNA(Gly) + glycine + ATP = glycyl-tRNA(Gly) + AMP + diphosphate. In terms of biological role, catalyzes the attachment of glycine to tRNA(Gly). This is Glycine--tRNA ligase from Rhodopirellula baltica (strain DSM 10527 / NCIMB 13988 / SH1).